Consider the following 1523-residue polypeptide: TALPID3 protein (1523 aa).

Over residues 1-16 the composition is skewed to polar residues; sequence MEAESGSSTSQDSLAS. Disordered stretches follow at residues 1–20 and 57–84; these read MEAESGSSTSQDSLASLTAG and SRQAAGVALSRGETPCEPPVPSSGASNG. Coiled-coil stretches lie at residues 428-466 and 499-528; these read IEKTVKKADDLLQVLGQLRKEMHDMLQEASSWKSDMNDL and ILSDAKRVLREVQSRKKVLEENLEAVLRAK. Residues 498–585 form a required for centrosomal localization region; that stretch reads SILSDAKRVL…MEQVKYDQKV (88 aa). Disordered regions lie at residues 1070–1112, 1137–1262, 1294–1313, 1373–1410, and 1498–1523; these read EPLV…LSGD, VITP…SEGE, ANEMDYDPPSEGQVVRRSHK, DIDHATARASEDRPYQGSRSPSPGQLTHPAEILGDADT, and SMNIDDQTQSLSSIHGDSDSSGADTF. The segment covering 1073-1088 has biased composition (pro residues); sequence VPTPLPTPQATPPQTP. Positions 1099-1108 are enriched in polar residues; that stretch reads TPESSPSITE. Composition is skewed to low complexity over residues 1137 to 1149 and 1236 to 1251; these read VITPISTPPEIIT and SSEQSTQESSLTPTET. Over residues 1373 to 1386 the composition is skewed to basic and acidic residues; the sequence is DIDHATARASEDRP. The segment covering 1507–1523 has biased composition (low complexity); that stretch reads SLSSIHGDSDSSGADTF.

It belongs to the TALPID3 family. Ubiquitously expressed.

The protein resides in the cytoplasm. It is found in the cytoskeleton. Its subcellular location is the microtubule organizing center. The protein localises to the centrosome. Functionally, required for ciliogenesis and sonic hedgehog/SHH signaling. Independently, involved in regulation of cell intracellular organization. Involved in regulation of cell polarity. In Gallus gallus (Chicken), this protein is TALPID3 protein (TALPID3).